A 122-amino-acid chain; its full sequence is Large ribosomal subunit protein uL14 (122 aa).

Belongs to the universal ribosomal protein uL14 family. In terms of assembly, part of the 50S ribosomal subunit. Forms a cluster with proteins L3 and L19. In the 70S ribosome, L14 and L19 interact and together make contacts with the 16S rRNA in bridges B5 and B8.

Its function is as follows. Binds to 23S rRNA. Forms part of two intersubunit bridges in the 70S ribosome. In Campylobacter concisus (strain 13826), this protein is Large ribosomal subunit protein uL14.